A 185-amino-acid polypeptide reads, in one-letter code: Large ribosomal subunit protein uL5 (185 aa).

Belongs to the universal ribosomal protein uL5 family. In terms of assembly, part of the 50S ribosomal subunit; part of the 5S rRNA/L5/L18/L25 subcomplex. Contacts the 5S rRNA and the P site tRNA. Forms a bridge to the 30S subunit in the 70S ribosome.

Its function is as follows. This is one of the proteins that bind and probably mediate the attachment of the 5S RNA into the large ribosomal subunit, where it forms part of the central protuberance. In the 70S ribosome it contacts protein S13 of the 30S subunit (bridge B1b), connecting the 2 subunits; this bridge is implicated in subunit movement. Contacts the P site tRNA; the 5S rRNA and some of its associated proteins might help stabilize positioning of ribosome-bound tRNAs. The chain is Large ribosomal subunit protein uL5 from Brucella abortus (strain 2308).